A 417-amino-acid chain; its full sequence is Histidine biosynthesis bifunctional protein his7 (417 aa).

The tract at residues 225-299 (GLVYSSKESV…HLDTLHCFGQ (75 aa)) is phosphoribosyl-AMP cyclohydrolase. Residues 303–387 (LCQLEKTLID…ISRHLDLKHR (85 aa)) are phosphoribosyl-ATP pyrophosphohydrolase.

The protein resides in the cytoplasm. It catalyses the reaction 1-(5-phospho-beta-D-ribosyl)-5'-AMP + H2O = 1-(5-phospho-beta-D-ribosyl)-5-[(5-phospho-beta-D-ribosylamino)methylideneamino]imidazole-4-carboxamide. The catalysed reaction is 1-(5-phospho-beta-D-ribosyl)-ATP + H2O = 1-(5-phospho-beta-D-ribosyl)-5'-AMP + diphosphate + H(+). The protein operates within amino-acid biosynthesis; L-histidine biosynthesis; L-histidine from 5-phospho-alpha-D-ribose 1-diphosphate: step 2/9. Its pathway is amino-acid biosynthesis; L-histidine biosynthesis; L-histidine from 5-phospho-alpha-D-ribose 1-diphosphate: step 3/9. The chain is Histidine biosynthesis bifunctional protein his7 from Schizosaccharomyces pombe (strain 972 / ATCC 24843) (Fission yeast).